A 444-amino-acid chain; its full sequence is Glutamate--tRNA ligase 1 (444 aa).

The 'HIGH' region signature appears at 8 to 18 (PSPTGFLHVGN). Positions 239 to 243 (KISKR) match the 'KMSKS' region motif. Lys242 contributes to the ATP binding site.

Belongs to the class-I aminoacyl-tRNA synthetase family. Glutamate--tRNA ligase type 1 subfamily. Monomer.

It is found in the cytoplasm. The catalysed reaction is tRNA(Glu) + L-glutamate + ATP = L-glutamyl-tRNA(Glu) + AMP + diphosphate. In terms of biological role, catalyzes the attachment of glutamate to tRNA(Glu) in a two-step reaction: glutamate is first activated by ATP to form Glu-AMP and then transferred to the acceptor end of tRNA(Glu). This chain is Glutamate--tRNA ligase 1, found in Zymomonas mobilis subsp. mobilis (strain ATCC 31821 / ZM4 / CP4).